Here is a 381-residue protein sequence, read N- to C-terminus: 4-hydroxy-3-methylbut-2-en-1-yl diphosphate synthase (flavodoxin) (381 aa).

Residues C280, C283, C315, and E322 each contribute to the [4Fe-4S] cluster site.

This sequence belongs to the IspG family. [4Fe-4S] cluster is required as a cofactor.

It catalyses the reaction (2E)-4-hydroxy-3-methylbut-2-enyl diphosphate + oxidized [flavodoxin] + H2O + 2 H(+) = 2-C-methyl-D-erythritol 2,4-cyclic diphosphate + reduced [flavodoxin]. It functions in the pathway isoprenoid biosynthesis; isopentenyl diphosphate biosynthesis via DXP pathway; isopentenyl diphosphate from 1-deoxy-D-xylulose 5-phosphate: step 5/6. Converts 2C-methyl-D-erythritol 2,4-cyclodiphosphate (ME-2,4cPP) into 1-hydroxy-2-methyl-2-(E)-butenyl 4-diphosphate. The chain is 4-hydroxy-3-methylbut-2-en-1-yl diphosphate synthase (flavodoxin) from Clavibacter sepedonicus (Clavibacter michiganensis subsp. sepedonicus).